Here is a 233-residue protein sequence, read N- to C-terminus: uncharacterized protein (233 aa).

The signal sequence occupies residues methionine 1–proline 23. Residues leucine 42–cysteine 217 are disordered. Over residues asparagine 45–proline 64 the composition is skewed to low complexity. A compositionally biased stretch (basic residues) spans histidine 65–histidine 211.

It localises to the secreted. This is an uncharacterized protein from Dictyostelium discoideum (Social amoeba).